The primary structure comprises 376 residues: Queuine tRNA-ribosyltransferase (376 aa).

D90 acts as the Proton acceptor in catalysis. Substrate-binding positions include 90-94 (DSGGF), D144, Q193, and G220. The interval 251-257 (GVGTPED) is RNA binding. The Nucleophile role is filled by D270. The tract at residues 275–279 (TRNAR) is RNA binding; important for wobble base 34 recognition. Zn(2+) contacts are provided by C308, C310, C313, and H339.

The protein belongs to the queuine tRNA-ribosyltransferase family. As to quaternary structure, homodimer. Within each dimer, one monomer is responsible for RNA recognition and catalysis, while the other monomer binds to the replacement base PreQ1. Zn(2+) is required as a cofactor.

It catalyses the reaction 7-aminomethyl-7-carbaguanine + guanosine(34) in tRNA = 7-aminomethyl-7-carbaguanosine(34) in tRNA + guanine. It participates in tRNA modification; tRNA-queuosine biosynthesis. In terms of biological role, catalyzes the base-exchange of a guanine (G) residue with the queuine precursor 7-aminomethyl-7-deazaguanine (PreQ1) at position 34 (anticodon wobble position) in tRNAs with GU(N) anticodons (tRNA-Asp, -Asn, -His and -Tyr). Catalysis occurs through a double-displacement mechanism. The nucleophile active site attacks the C1' of nucleotide 34 to detach the guanine base from the RNA, forming a covalent enzyme-RNA intermediate. The proton acceptor active site deprotonates the incoming PreQ1, allowing a nucleophilic attack on the C1' of the ribose to form the product. After dissociation, two additional enzymatic reactions on the tRNA convert PreQ1 to queuine (Q), resulting in the hypermodified nucleoside queuosine (7-(((4,5-cis-dihydroxy-2-cyclopenten-1-yl)amino)methyl)-7-deazaguanosine). This Campylobacter concisus (strain 13826) protein is Queuine tRNA-ribosyltransferase.